A 212-amino-acid chain; its full sequence is Proteasome subunit beta (212 aa).

The propeptide at 1–11 (MSQEHQDVKTG) is removed in mature form; by autocatalysis. Residue T12 is the Nucleophile of the active site.

The protein belongs to the peptidase T1B family. As to quaternary structure, the 20S proteasome core is composed of 14 alpha and 14 beta subunits that assemble into four stacked heptameric rings, resulting in a barrel-shaped structure. The two inner rings, each composed of seven catalytic beta subunits, are sandwiched by two outer rings, each composed of seven alpha subunits. The catalytic chamber with the active sites is on the inside of the barrel. Has a gated structure, the ends of the cylinder being occluded by the N-termini of the alpha-subunits. Is capped at one or both ends by the proteasome regulatory ATPase, PAN.

It is found in the cytoplasm. It carries out the reaction Cleavage of peptide bonds with very broad specificity.. Its activity is regulated as follows. The formation of the proteasomal ATPase PAN-20S proteasome complex, via the docking of the C-termini of PAN into the intersubunit pockets in the alpha-rings, triggers opening of the gate for substrate entry. Interconversion between the open-gate and close-gate conformations leads to a dynamic regulation of the 20S proteasome proteolysis activity. Its function is as follows. Component of the proteasome core, a large protease complex with broad specificity involved in protein degradation. The sequence is that of Proteasome subunit beta from Methanocorpusculum labreanum (strain ATCC 43576 / DSM 4855 / Z).